The sequence spans 224 residues: Cerebellin-2 (224 aa).

Positions 1–51 (MQAPGRGPLGLRLMMPGRRGALREPGGCGSCLGVALALLLLLLPACCPVRA) are cleaved as a signal peptide. 2 N-linked (GlcNAc...) asparagine glycosylation sites follow: N53 and N110. Positions 88–224 (SGSAKVAFSA…TFSGFLVFPL (137 aa)) constitute a C1q domain.

In terms of assembly, homohexamer; disulfide-linked homotrimers. The trimers are assembled via the globular C1q domains. The trimers associate via N-terminal cysteine residues to form disulfide-linked hexamers. May form homooligomers or heterooligomers with CBLN1 and CBLN3 prior to secretion. Once secreted, does not interact with other CBLN family members. Interacts with GRID2, and more weakly with GRID1. Interacts with NRXN1 and NRXN2 long and short isoforms produced by alternative promoter usage. Weakly interacts with NRXN3 short isoform and not at all with NRXN3 long isoform.

The protein localises to the secreted. Acts as a synaptic organizer in specific subsets of neurons in the brain. Essential for long-term maintenance but not establishment of excitatory synapses. Functions as part of a trans-synaptic complex by binding to postsynaptic GRID1 and presynaptic neurexins. This interaction helps regulate the activity of NMDA and AMPA receptors at hippocampal synapses without affecting synapse formation. NRXN1B-CBLN2-GRID1 complex transduce presynaptic signals into postsynaptic NMDAR response. NRXN3B-CBLN2-GRID1 complex transduce presynaptic signals into postsynaptic AMPAR response. This Homo sapiens (Human) protein is Cerebellin-2.